The following is a 780-amino-acid chain: Acetyl-CoA decarbonylase/synthase complex subunit alpha (780 aa).

Residues C73, C76, C77, C79, C84, and C93 each contribute to the [4Fe-4S] cluster site. H116 contributes to the CO binding site. H250, C278, and C317 together coordinate [Ni-4Fe-4S] cluster. 4Fe-4S ferredoxin-type domains are found at residues 399 to 429 and 440 to 469; these read IDEI…MDAV and LEEM…VSMV. [4Fe-4S] cluster is bound by residues C409, C412, C415, C419, C449, C452, C455, and C459. Positions 517, 546, and 581 each coordinate [Ni-4Fe-4S] cluster.

It belongs to the Ni-containing carbon monoxide dehydrogenase family. In terms of assembly, heterotetramer of two alpha and two epsilon subunits. The ACDS complex is made up of alpha, epsilon, beta, gamma and delta subunits with a probable stoichiometry of (alpha(2)epsilon(2))(4)-beta(8)-(gamma(1)delta(1))(8). [4Fe-4S] cluster serves as cofactor. Requires [Ni-4Fe-4S] cluster as cofactor.

The catalysed reaction is CO + 2 oxidized [2Fe-2S]-[ferredoxin] + H2O = 2 reduced [2Fe-2S]-[ferredoxin] + CO2 + 2 H(+). Its function is as follows. Part of the ACDS complex that catalyzes the reversible cleavage of acetyl-CoA, allowing autotrophic growth from CO(2). The alpha-epsilon subcomponent functions as a carbon monoxide dehydrogenase. The chain is Acetyl-CoA decarbonylase/synthase complex subunit alpha from Methanothermobacter thermautotrophicus (strain ATCC 29096 / DSM 1053 / JCM 10044 / NBRC 100330 / Delta H) (Methanobacterium thermoautotrophicum).